A 202-amino-acid chain; its full sequence is MSDTPVIGVLALQGDVREHLVALAVADAVARPVRRPEELAEVDGLVLPGGESTTISKLAVLFGVMDPLRARVRDGMPVYGTCAGMIMLADKILDPRSGQETVGGIDMIVRRNAFGRQNESFEAAVDVEGVEGEPVEGVFIRAPWVESVGAAAEVLAEHDGHIVAVRQGNALATSFHPELTGDHRVHRLFADMVRANRAAQSL.

Residue 50–52 participates in L-glutamine binding; the sequence is GES. C82 acts as the Nucleophile in catalysis. L-glutamine contacts are provided by residues R111 and 140-141; that span reads IR. Catalysis depends on charge relay system residues H176 and E178.

Belongs to the glutaminase PdxT/SNO family. As to quaternary structure, in the presence of PdxS, forms a dodecamer of heterodimers. Only shows activity in the heterodimer.

It catalyses the reaction aldehydo-D-ribose 5-phosphate + D-glyceraldehyde 3-phosphate + L-glutamine = pyridoxal 5'-phosphate + L-glutamate + phosphate + 3 H2O + H(+). The enzyme catalyses L-glutamine + H2O = L-glutamate + NH4(+). It participates in cofactor biosynthesis; pyridoxal 5'-phosphate biosynthesis. Catalyzes the hydrolysis of glutamine to glutamate and ammonia as part of the biosynthesis of pyridoxal 5'-phosphate. The resulting ammonia molecule is channeled to the active site of PdxS. This is Pyridoxal 5'-phosphate synthase subunit PdxT from Streptomyces coelicolor (strain ATCC BAA-471 / A3(2) / M145).